Consider the following 237-residue polypeptide: Early nodulin-like protein 1 (237 aa).

The first 28 residues, 1 to 28 (MEASRRWPYAAWFMAVLGLVAVFSSSEA), serve as a signal peptide directing secretion. The Phytocyanin domain occupies 29–134 (YVFYAGGRDG…GQKLYIIVMA (106 aa)). Asparagine 59 carries N-linked (GlcNAc...) asparagine glycosylation. Cysteine 85 and cysteine 122 are oxidised to a cystine. The interval 139–215 (KPSEAPEPAG…SLGAPPPTSG (77 aa)) is disordered. Low complexity-rich tracts occupy residues 140-152 (PSEAPEPAGAAGP) and 201-215 (MSRSSSLGAPPPTSG). The GPI-anchor amidated serine moiety is linked to residue serine 206. The propeptide at 207 to 237 (LGAPPPTSGAAGLAGVVASVVVGVLGALLMF) is removed in mature form.

It belongs to the early nodulin-like (ENODL) family. As to expression, expressed ubiquitously. Accumulates particularly in reproductive tissues, especially in maturing seeds.

It localises to the vacuole. Its subcellular location is the aleurone grain membrane. Its function is as follows. May act as a carbohydrate transporter. The chain is Early nodulin-like protein 1 from Oryza sativa subsp. japonica (Rice).